The sequence spans 273 residues: 4-hydroxy-tetrahydrodipicolinate reductase (273 aa).

NAD(+)-binding positions include 8-13 (GALGRM), aspartate 35, 103-105 (GTT), and 129-132 (SQNY). The active-site Proton donor/acceptor is the histidine 161. Residue histidine 162 participates in (S)-2,3,4,5-tetrahydrodipicolinate binding. Residue lysine 165 is the Proton donor of the active site. 171–172 (GT) serves as a coordination point for (S)-2,3,4,5-tetrahydrodipicolinate.

The protein belongs to the DapB family.

The protein localises to the cytoplasm. It catalyses the reaction (S)-2,3,4,5-tetrahydrodipicolinate + NAD(+) + H2O = (2S,4S)-4-hydroxy-2,3,4,5-tetrahydrodipicolinate + NADH + H(+). The enzyme catalyses (S)-2,3,4,5-tetrahydrodipicolinate + NADP(+) + H2O = (2S,4S)-4-hydroxy-2,3,4,5-tetrahydrodipicolinate + NADPH + H(+). The protein operates within amino-acid biosynthesis; L-lysine biosynthesis via DAP pathway; (S)-tetrahydrodipicolinate from L-aspartate: step 4/4. In terms of biological role, catalyzes the conversion of 4-hydroxy-tetrahydrodipicolinate (HTPA) to tetrahydrodipicolinate. The chain is 4-hydroxy-tetrahydrodipicolinate reductase from Methanococcus aeolicus (strain ATCC BAA-1280 / DSM 17508 / OCM 812 / Nankai-3).